A 316-amino-acid chain; its full sequence is Ferrochelatase (316 aa).

Positions 186 and 268 each coordinate Fe cation.

The protein belongs to the ferrochelatase family.

It localises to the cytoplasm. The catalysed reaction is heme b + 2 H(+) = protoporphyrin IX + Fe(2+). It functions in the pathway porphyrin-containing compound metabolism; protoheme biosynthesis; protoheme from protoporphyrin-IX: step 1/1. In terms of biological role, catalyzes the ferrous insertion into protoporphyrin IX. The protein is Ferrochelatase of Deinococcus radiodurans (strain ATCC 13939 / DSM 20539 / JCM 16871 / CCUG 27074 / LMG 4051 / NBRC 15346 / NCIMB 9279 / VKM B-1422 / R1).